A 192-amino-acid chain; its full sequence is MAAIRKKLVIVGDGACGKTCLLIVFSKDQFPEVYVPTVFENYVADIEVDGKQVELALWDTAGQEDYDRLRPLSYPDTDVILMCFSIDSPDSLENIPEKWTPEVKHFCPNIPIILVGNKKTAGDEHTRRELAKMKQEPVKPDDAKEMGSRIKAFGYLECSAKTKEGVREVFELASRAALQAKKTKSKSPCLLL.

12–19 contributes to the GTP binding site; it reads GDGACGKT. The Effector region motif lies at 34 to 42; that stretch reads YVPTVFENY. GTP-binding positions include 59–63 and 117–120; these read DTAGQ and NKKT. Cys189 is subject to Cysteine methyl ester. The S-geranylgeranyl cysteine moiety is linked to residue Cys189. The propeptide at 190-192 is removed in mature form; the sequence is LLL.

This sequence belongs to the small GTPase superfamily. Rho family.

Its subcellular location is the cell membrane. This chain is Ras-like GTP-binding protein O-RHO, found in Diplobatis ommata (Ocellated electric ray).